A 121-amino-acid chain; its full sequence is Prefoldin subunit beta (121 aa).

It belongs to the prefoldin subunit beta family. Heterohexamer of two alpha and four beta subunits.

It localises to the cytoplasm. Functionally, molecular chaperone capable of stabilizing a range of proteins. Seems to fulfill an ATP-independent, HSP70-like function in archaeal de novo protein folding. This chain is Prefoldin subunit beta, found in Methanosphaerula palustris (strain ATCC BAA-1556 / DSM 19958 / E1-9c).